The sequence spans 337 residues: NADH-quinone oxidoreductase subunit H (337 aa).

The next 9 helical transmembrane spans lie at 9-29 (GIPLAIIAAQSLALIVALLLV), 50-70 (PNVVGAFGLLQSFADLLKFVF), 82-102 (GIFLLAPLVTVVLALSGWAVI), 115-135 (VGILYIFAISSLGVYGVIMAG), 161-181 (IGFVIVCVLMTAGSLNLTAIV), 186-206 (TIWYFIPHLPMFVIFFISALA), 245-265 (SILLMCAMTTILFLGGWLPPI), 273-293 (VPGVIWFLLKVFLVFFMFAMV), and 313-333 (FLPISLFWVVLTAGVLVGFDI).

Belongs to the complex I subunit 1 family. As to quaternary structure, NDH-1 is composed of 14 different subunits. Subunits NuoA, H, J, K, L, M, N constitute the membrane sector of the complex.

It localises to the cell inner membrane. It carries out the reaction a quinone + NADH + 5 H(+)(in) = a quinol + NAD(+) + 4 H(+)(out). NDH-1 shuttles electrons from NADH, via FMN and iron-sulfur (Fe-S) centers, to quinones in the respiratory chain. The immediate electron acceptor for the enzyme in this species is believed to be ubiquinone. Couples the redox reaction to proton translocation (for every two electrons transferred, four hydrogen ions are translocated across the cytoplasmic membrane), and thus conserves the redox energy in a proton gradient. This subunit may bind ubiquinone. This Parvibaculum lavamentivorans (strain DS-1 / DSM 13023 / NCIMB 13966) protein is NADH-quinone oxidoreductase subunit H.